We begin with the raw amino-acid sequence, 451 residues long: Chromosomal replication initiator protein DnaA (451 aa).

The interval 1–71 (MSEQEIWKKV…QTIMKDVIGY (71 aa)) is domain I, interacts with DnaA modulators. Residues 71–112 (YEVEPKFFTAEQLAELDETSRKSNTPSEPQRQIIEYGHEGTD) form a domain II region. The domain III, AAA+ region stretch occupies residues 113 to 329 (QFNTHNTFDT…GALTRLLAYS (217 aa)). Residues glycine 157, glycine 159, lysine 160, and threonine 161 each coordinate ATP. Residues 330 to 451 (KLQGRPITTE…EDLEKEIRNQ (122 aa)) are domain IV, binds dsDNA.

Belongs to the DnaA family. In terms of assembly, oligomerizes as a right-handed, spiral filament on DNA at oriC.

It is found in the cytoplasm. Its function is as follows. Plays an essential role in the initiation and regulation of chromosomal replication. ATP-DnaA binds to the origin of replication (oriC) to initiate formation of the DNA replication initiation complex once per cell cycle. Binds the DnaA box (a 9 base pair repeat at the origin) and separates the double-stranded (ds)DNA. Forms a right-handed helical filament on oriC DNA; dsDNA binds to the exterior of the filament while single-stranded (ss)DNA is stabiized in the filament's interior. The ATP-DnaA-oriC complex binds and stabilizes one strand of the AT-rich DNA unwinding element (DUE), permitting loading of DNA polymerase. After initiation quickly degrades to an ADP-DnaA complex that is not apt for DNA replication. Binds acidic phospholipids. This is Chromosomal replication initiator protein DnaA from Staphylococcus haemolyticus (strain JCSC1435).